The chain runs to 84 residues: MPYVLISTQIRMETGPTIVGDEFSDLVLMAQLEADKRTVLGNNFSEYYVNEPPRVTLNKLERLGYRVVSMTGVGQTLVWCLHKE.

This sequence belongs to the GFRP family. In terms of assembly, homopentamer. Forms a complex with GCH1 where a GCH1 homodecamer is sandwiched by two GFRP homopentamers.

It is found in the nucleus. It localises to the nucleus membrane. Its subcellular location is the cytoplasm. The protein resides in the cytosol. Functionally, mediates tetrahydrobiopterin inhibition of GTP cyclohydrolase 1. This Xenopus laevis (African clawed frog) protein is GTP cyclohydrolase 1 feedback regulatory protein (gchfr).